We begin with the raw amino-acid sequence, 479 residues long: Endosomal/lysosomal proton channel TMEM175 (479 aa).

The interval 1–26 (MSGPQAPEPTLEGQADASAGSPDEDA) is disordered. Residues 1 to 33 (MSGPQAPEPTLEGQADASAGSPDEDAAEGIQHS) are Cytoplasmic-facing. Residues 34–56 (HRMLSFSDALLSIIATVMEFDKS) form a helical membrane-spanning segment. A RxxxFSD motif 1 motif is present at residues 35 to 41 (RMLSFSD). The interval 52–58 (EFDKSVQ) is short helix H2-1. The Lumenal portion of the chain corresponds to 57 to 64 (VQRLLATR). Residues 65 to 87 (IAVYLMTFLIVTVAWAAHTRLFQ) traverse the membrane as a helical segment. Residues 88–93 (VVGKID) lie on the Cytoplasmic side of the membrane. A helical membrane pass occupies residues 94-103 (DTLALLNLFS). The Lumenal portion of the chain corresponds to 104–113 (LMVTFPEVPL). A helical membrane pass occupies residues 114–135 (GIFLFCMCVIAIGAVQALIVLY). The Cytoplasmic portion of the chain corresponds to 136 to 159 (AFHFPHLLSPQIERSAHRGLYRQR). The helical transmembrane segment at 160-180 (VLGIIVRGPALCLAAAGFSLF) threads the bilayer. Residues 181–185 (FYPAS) are Lumenal-facing. Residues 186-205 (YLLMAMVIVLPHVSKAAGWC) traverse the membrane as a helical segment. At 206 to 232 (RAQLVGPREPPAHSVEVFTFDLHEPLS) the chain is on the cytoplasmic side. The chain crosses the membrane as a helical span at residues 233–257 (KERVEAFSDGVYAIVATLLILDICE). A RxxxFSD motif 2 motif is present at residues 235-241 (RVEAFSD). Residues 258–284 (DNVPDAKDVKEKFQGSLVAALGESGPH) lie on the Lumenal side of the membrane. The tract at residues 263–271 (AKDVKEKFQ) is short helix H1-2. A short helix H2-2 region spans residues 273 to 279 (SLVAALG). Residues 285–307 (FLAYFGSFATVGLLWFAHHSLFL) traverse the membrane as a helical segment. The Cytoplasmic portion of the chain corresponds to 308–313 (HIRRAT). Residues 314–335 (QPMGLLNTLSLAFVGGLPLAYQ) form a helical membrane-spanning segment. Residues 336–350 (QTSAFTKQPRDELES) lie on the Lumenal side of the membrane. Residues 351-371 (VRISCAIIFLASIFQFAIWTT) traverse the membrane as a helical segment. Residues 372–391 (ALLQEGETLQPSARFGGREH) lie on the Cytoplasmic side of the membrane. The chain crosses the membrane as a helical span at residues 392–415 (AFMFAKLALYPCASLLAFACTCVL). The Lumenal segment spans residues 416–417 (SS). Residues 418 to 444 (FSTAIFHAMQIAVPFAFLLLRLLVRLA) traverse the membrane as a helical segment. Residues 445 to 479 (LAGLRALRGLVGPVLARPAPGAADEAQSPLLPAPC) are Cytoplasmic-facing.

The protein belongs to the TMEM175 family. In terms of assembly, homodimer. Interacts with AKT (AKT1, AKT2 or AKT3); leading to formation of the lysoK(GF) complex, which activates the channel. Interacts with LAMP1; inhibiting the proton channel activity of TMEM175. Interacts with LAMP2; inhibiting the proton channel activity of TMEM175.

The protein localises to the endosome membrane. Its subcellular location is the lysosome membrane. The catalysed reaction is H(+)(in) = H(+)(out). It catalyses the reaction K(+)(in) = K(+)(out). With respect to regulation, active at low pH (under pH 4.6): proton channel activity is activated by luminal side protons. Polyunsaturated fatty acids, such as arachidonic acid, also activate the channel activity. Proton channel activity is directly inhibited by LAMP1 or LAMP2, facilitating lysosomal acidification. Channel activity is activated following interaction with AKT (AKT1, AKT2 or AKT3): interaction promotes activation from closed to an open state. Activation by AKT is independent of AKT serine/threonine-protein kinase activity. In terms of biological role, proton-activated proton channel that catalyzes proton efflux from endosomes and lysosomes to maintain a steady-state pH. Activated at low pH (under pH 4.6) by luminal side protons: selectively mediates lysosomal proton release from lysosomes, eliciting a proton leak that balances V-ATPase activity to maintain pH homeostasis. Regulation of lumenal pH stability is required for autophagosome-lysosome fusion. Also acts as a potassium channel at higher pH, regulating potassium conductance in endosomes and lysosomes. Constitutes the pore-forming subunit of the lysoK(GF) complex, a complex activated by extracellular growth factors. The lysoK(GF) complex is composed of TMEM175 and AKT (AKT1, AKT2 or AKT3), a major target of growth factor receptors: in the complex, TMEM175 channel is opened by conformational changes by AKT, leading to its activation. The lysoK(GF) complex is required to protect neurons against stress-induced damage. The sequence is that of Endosomal/lysosomal proton channel TMEM175 from Bos taurus (Bovine).